Here is a 525-residue protein sequence, read N- to C-terminus: Ent-kaurene oxidase (525 aa).

The helical transmembrane segment at V31–L51 threads the bilayer. Heme is bound at residue C466.

Belongs to the cytochrome P450 family. Heme serves as cofactor.

The protein resides in the membrane. The enzyme catalyses ent-kaur-16-ene + 3 reduced [NADPH--hemoprotein reductase] + 3 O2 = ent-kaur-16-en-19-oate + 3 oxidized [NADPH--hemoprotein reductase] + 4 H2O + 4 H(+). Its pathway is plant hormone biosynthesis; gibberellin biosynthesis. Catalyzes three successive oxidations of the 4-methyl group of ent-kaurene giving kaurenoic acid, a key step in gibberellin (GA) biosynthesis. The polypeptide is Ent-kaurene oxidase (CYP503A1) (Fusarium fujikuroi (Bakanae and foot rot disease fungus)).